A 238-amino-acid polypeptide reads, in one-letter code: 3-dehydroquinate dehydratase (238 aa).

3-dehydroquinate contacts are provided by residues 35 to 37 and arginine 70; that span reads ELR. Histidine 133 (proton donor/acceptor) is an active-site residue. Lysine 160 serves as the catalytic Schiff-base intermediate with substrate. Residues arginine 202 and glutamine 225 each contribute to the 3-dehydroquinate site.

The protein belongs to the type-I 3-dehydroquinase family. In terms of assembly, homodimer.

The enzyme catalyses 3-dehydroquinate = 3-dehydroshikimate + H2O. It participates in metabolic intermediate biosynthesis; chorismate biosynthesis; chorismate from D-erythrose 4-phosphate and phosphoenolpyruvate: step 3/7. Its function is as follows. Involved in the third step of the chorismate pathway, which leads to the biosynthesis of aromatic amino acids. Catalyzes the cis-dehydration of 3-dehydroquinate (DHQ) and introduces the first double bond of the aromatic ring to yield 3-dehydroshikimate. This Staphylococcus aureus (strain bovine RF122 / ET3-1) protein is 3-dehydroquinate dehydratase.